Consider the following 229-residue polypeptide: Large ribosomal subunit protein uL1 (229 aa).

This sequence belongs to the universal ribosomal protein uL1 family. As to quaternary structure, part of the 50S ribosomal subunit.

Its function is as follows. Binds directly to 23S rRNA. The L1 stalk is quite mobile in the ribosome, and is involved in E site tRNA release. In terms of biological role, protein L1 is also a translational repressor protein, it controls the translation of the L11 operon by binding to its mRNA. The chain is Large ribosomal subunit protein uL1 from Caulobacter vibrioides (strain ATCC 19089 / CIP 103742 / CB 15) (Caulobacter crescentus).